We begin with the raw amino-acid sequence, 145 residues long: Superoxide dismutase [Mn/Fe] (145 aa).

Fe(3+) contacts are provided by histidine 10 and histidine 64. Mn(2+)-binding residues include histidine 10 and histidine 64.

Belongs to the iron/manganese superoxide dismutase family. Mn(2+) serves as cofactor. Requires Fe(3+) as cofactor.

The catalysed reaction is 2 superoxide + 2 H(+) = H2O2 + O2. Its function is as follows. Destroys superoxide anion radicals which are normally produced within the cells and which are toxic to biological systems. Catalyzes the dismutation of superoxide anion radicals into O2 and H2O2 by successive reduction and oxidation of the transition metal ion at the active site. This is Superoxide dismutase [Mn/Fe] (sodA) from Streptococcus iniae (Streptococcus shiloi).